The sequence spans 141 residues: Large ribosomal subunit protein uL22 (141 aa).

This sequence belongs to the universal ribosomal protein uL22 family. Part of the 50S ribosomal subunit.

Its function is as follows. This protein binds specifically to 23S rRNA; its binding is stimulated by other ribosomal proteins, e.g. L4, L17, and L20. It is important during the early stages of 50S assembly. It makes multiple contacts with different domains of the 23S rRNA in the assembled 50S subunit and ribosome. In terms of biological role, the globular domain of the protein is located near the polypeptide exit tunnel on the outside of the subunit, while an extended beta-hairpin is found that lines the wall of the exit tunnel in the center of the 70S ribosome. The chain is Large ribosomal subunit protein uL22 from Frankia alni (strain DSM 45986 / CECT 9034 / ACN14a).